The chain runs to 438 residues: UDP-N-acetylmuramate--L-alanine ligase (438 aa).

Residue 108–114 (GAHGKTS) coordinates ATP.

It belongs to the MurCDEF family.

It localises to the cytoplasm. The enzyme catalyses UDP-N-acetyl-alpha-D-muramate + L-alanine + ATP = UDP-N-acetyl-alpha-D-muramoyl-L-alanine + ADP + phosphate + H(+). Its pathway is cell wall biogenesis; peptidoglycan biosynthesis. In terms of biological role, cell wall formation. In Oceanobacillus iheyensis (strain DSM 14371 / CIP 107618 / JCM 11309 / KCTC 3954 / HTE831), this protein is UDP-N-acetylmuramate--L-alanine ligase.